We begin with the raw amino-acid sequence, 277 residues long: Large ribosomal subunit protein uL2c (277 aa).

The disordered stretch occupies residues 223-277 (VVMNPIDHPHGGGEGRAPIGRKKPLTPWGHPALGKRSRKNNKYSDTLILRRRKNS).

The protein belongs to the universal ribosomal protein uL2 family. In terms of assembly, part of the 50S ribosomal subunit.

The protein localises to the plastid. It is found in the chloroplast. In Marchantia polymorpha (Common liverwort), this protein is Large ribosomal subunit protein uL2c (rpl2).